The primary structure comprises 3677 residues: Dystrophin (3677 aa).

Residues Met1 to Pro240 are actin-binding. 2 consecutive Calponin-homology (CH) domains span residues Asp15–Gln119 and Thr134–Pro240. The interval Pro63–His72 is ANK2- and ANK-3 binding. Spectrin repeat units lie at residues Leu342–His447, Met451–Asp557, Leu560–Gln668, Asp728–Glu828, Asn831–Thr935, Arg944–Glu1046, Asn1049–Lys1154, Leu1163–Glu1264, Cys1268–Lys1464, Glu1469–Lys1569, Leu1573–Leu1676, Lys1680–Ala1777, Ile1779–Glu1875, His1878–Glu1980, Tyr2001–Gly2098, Lys2106–Glu2209, Ser2215–Glu2316, Val2317–Lys2415, Ala2465–Glu2569, Gln2576–Glu2678, Leu2682–Leu2786, Lys2800–Asp2922, and Arg2927–Glu3032. The interaction with SYNM stretch occupies residues Ser1416–Lys1914. The WW domain maps to Thr3047–Met3080. The interval Gln3050–Thr3400 is interaction with SYNM. Residues Lys3300 to Thr3356 form a ZZ-type; degenerate zinc finger. Cys3305, Cys3308, Cys3329, and Cys3332 together coordinate Zn(2+). Positions Asp3458 to Arg3510 are binds to SNTB1. 3 positions are modified to phosphoserine: Ser3475, Ser3482, and Ser3492. 2 disordered regions span residues Lys3520–Arg3546 and Glu3595–Met3677. Polar residues-rich tracts occupy residues Asn3599 to Pro3618 and Gln3654 to Gly3664. Ser3604, Ser3605, Ser3609, Ser3615, Ser3616, and Ser3658 each carry phosphoserine.

As to quaternary structure, interacts with SYNM. Interacts with the syntrophins SNTG1 and SNTG2. Interacts with KRT19. Component of the dystrophin-associated glycoprotein complex which is composed of three subcomplexes: a cytoplasmic complex comprised of DMD (or UTRN), DTNA and a number of syntrophins, such as SNTB1, SNTB2, SNTG1 and SNTG2, the transmembrane dystroglycan complex, and the sarcoglycan-sarcospan complex. Interacts with DAG1 (betaDAG1) with DMD; the interaction is inhibited by phosphorylation on the PPXY motif of DAG1. Interacts with SYNM; SNTA1 and SNTB1. Interacts with CMYA5. Directly interacts with ANK2 and ANK3; these interactions do not interfere with betaDAG1-binding and are necessary for proper localization in muscle cells. Identified in a dystroglycan complex that contains at least PRX, DRP2, UTRN, DMD and DAG1. Interacts with DTNB. Interacts with PGM5; the interaction is direct. Interacts with NOS1; localizes NOS1 to sarcolemma in muscle cells. In terms of tissue distribution, strongly expressed in skeletal muscle and weak expression observed in newborn brain which increases in adult brain.

The protein localises to the cell membrane. It is found in the sarcolemma. It localises to the cytoplasm. The protein resides in the cytoskeleton. Its subcellular location is the postsynaptic cell membrane. Its function is as follows. Anchors the extracellular matrix to the cytoskeleton via F-actin. Ligand for dystroglycan. Component of the dystrophin-associated glycoprotein complex which accumulates at the neuromuscular junction (NMJ) and at a variety of synapses in the peripheral and central nervous systems and has a structural function in stabilizing the sarcolemma. Also implicated in signaling events and synaptic transmission. This is Dystrophin (Dmd) from Rattus norvegicus (Rat).